Consider the following 235-residue polypeptide: NAD(P)H-hydrate epimerase (235 aa).

A YjeF N-terminal domain is found at 18-221 (AAQIDEQLFT…SLVDEHELLM (204 aa)). Residue 65–69 (NNGGD) participates in (6S)-NADPHX binding. K(+)-binding residues include Asn66 and Asp127. (6S)-NADPHX contacts are provided by residues 131–137 (GFSFHPP) and Asp160. K(+) is bound at residue Ser163.

Belongs to the NnrE/AIBP family. K(+) serves as cofactor.

It carries out the reaction (6R)-NADHX = (6S)-NADHX. The catalysed reaction is (6R)-NADPHX = (6S)-NADPHX. In terms of biological role, catalyzes the epimerization of the S- and R-forms of NAD(P)HX, a damaged form of NAD(P)H that is a result of enzymatic or heat-dependent hydration. This is a prerequisite for the S-specific NAD(P)H-hydrate dehydratase to allow the repair of both epimers of NAD(P)HX. This is NAD(P)H-hydrate epimerase from Caenorhabditis elegans.